Consider the following 666-residue polypeptide: MATTVTCTRFTDEYQLYEDIGKGAFSVVRRCVKLCTGHEYAAKIINTKKLSARDHQKLEREARICRLLKHSNIVRLHDSISEEGFHYLVFDLVTGGELFEDIVAREYYSEADASHCIQQILEAVLHCHQMGVVHRDLKPENLLLASKCKGAAVKLADFGLAIEVQGDQQAWFGFAGTPGYLSPEVLRKEAYGKPVDIWACGVILYILLVGYPPFWDEDQHKLYQQIKAGAYDFPSPEWDTVTPEAKNLINQMLTINPAKRITAHEALKHPWVCQRSTVASMMHRQETVECLKKFNARRKLKGAILTTMLATRNFSVGRQTTAPATMSTAASGTTMGLVEQAKSLLNKKADGVKPQTNSTKNSAAATSPKGTLPPAALEPQTTVIHNPVDGIKESSDSANTTIEDEDAKAPRVPDILSSVRRGSGAPEAEGPLPCPSPAPFSPLPAPSPRISDILNSVRRGSGTPEAEGPLSAGPPPCLSPALLGPLSSPSPRISDILNSVRRGSGTPEAEGPSPVGPPPCPSPTIPGPLPTPSRKQEIIKTTEQLIEAVNNGDFEAYAKICDPGLTSFEPEALGNLVEGMDFHRFYFENLLAKNSKPIHTTILNPHVHVIGEDAACIAYIRLTQYIDGQGRPRTSQSEETRVWHRRDGKWQNVHFHCSGAPVAPLQ.

The region spanning 14-272 is the Protein kinase domain; it reads YQLYEDIGKG…AHEALKHPWV (259 aa). Tyrosine 17 carries the phosphotyrosine modification. ATP contacts are provided by residues 20–28 and lysine 43; that span reads IGKGAFSVV. The active-site Proton acceptor is the aspartate 136. The segment at 283–292 is autoinhibitory domain; the sequence is HRQETVECLK. Phosphothreonine; by autocatalysis is present on threonine 287. The tract at residues 291-301 is calmodulin-binding; it reads LKKFNARRKLK. Phosphothreonine; by autocatalysis is present on residues threonine 306 and threonine 307. Residues 349–534 are disordered; sequence ADGVKPQTNS…IPGPLPTPSR (186 aa). A compositionally biased stretch (polar residues) spans 354–369; the sequence is PQTNSTKNSAAATSPK. 3 positions are modified to phosphoserine: serine 367, serine 394, and serine 397. Threonine 400 and threonine 401 each carry phosphothreonine. Pro residues predominate over residues 432 to 447; sequence LPCPSPAPFSPLPAPS. Residues 479–491 are compositionally biased toward low complexity; sequence SPALLGPLSSPSP. Over residues 514-531 the composition is skewed to pro residues; sequence PVGPPPCPSPTIPGPLPT.

Belongs to the protein kinase superfamily. CAMK Ser/Thr protein kinase family. CaMK subfamily. As to quaternary structure, CAMK2 is composed of 4 different chains: alpha (CAMK2A), beta (CAMK2B), gamma (CAMK2G), and delta (CAMK2D). The different isoforms assemble into homo- or heteromultimeric holoenzymes composed of 12 subunits with two hexameric rings stacked one on top of the other. Interacts with SYNGAP1 and CAMK2N2. Interacts with MPDZ. Interacts with FOXO3. Interacts (when in a kinase inactive state not associated with calmodulin) with ARC; leading to target ARC to inactive synapses. Interacts with CAMK2N1; this interaction requires CAMK2B activation by Ca(2+). Autophosphorylation of Thr-287 following activation by Ca(2+)/calmodulin. Phosphorylation of Thr-287 locks the kinase into an activated state. As to expression, widely expressed. Expressed in adult and fetal brain. Expression is slightly lower in fetal brain. Expressed in skeletal muscle.

The protein resides in the cytoplasm. Its subcellular location is the cytoskeleton. It is found in the microtubule organizing center. It localises to the centrosome. The protein localises to the sarcoplasmic reticulum membrane. The protein resides in the synapse. It carries out the reaction L-seryl-[protein] + ATP = O-phospho-L-seryl-[protein] + ADP + H(+). It catalyses the reaction L-threonyl-[protein] + ATP = O-phospho-L-threonyl-[protein] + ADP + H(+). Activated by Ca(2+)/calmodulin. Binding of calmodulin results in conformational change that relieves intrasteric autoinhibition and allows autophosphorylation of Thr-287 which turns the kinase in a constitutively active form and confers to the kinase a Ca(2+)-independent activity. Calcium/calmodulin-dependent protein kinase that functions autonomously after Ca(2+)/calmodulin-binding and autophosphorylation, and is involved in dendritic spine and synapse formation, neuronal plasticity and regulation of sarcoplasmic reticulum Ca(2+) transport in skeletal muscle. In neurons, plays an essential structural role in the reorganization of the actin cytoskeleton during plasticity by binding and bundling actin filaments in a kinase-independent manner. This structural function is required for correct targeting of CaMK2A, which acts downstream of NMDAR to promote dendritic spine and synapse formation and maintain synaptic plasticity which enables long-term potentiation (LTP) and hippocampus-dependent learning. In developing hippocampal neurons, promotes arborization of the dendritic tree and in mature neurons, promotes dendritic remodeling. Also regulates the migration of developing neurons. Participates in the modulation of skeletal muscle function in response to exercise. In slow-twitch muscles, is involved in regulation of sarcoplasmic reticulum (SR) Ca(2+) transport and in fast-twitch muscle participates in the control of Ca(2+) release from the SR through phosphorylation of triadin, a ryanodine receptor-coupling factor, and phospholamban (PLN/PLB), an endogenous inhibitor of SERCA2A/ATP2A2. In response to interferon-gamma (IFN-gamma) stimulation, catalyzes phosphorylation of STAT1, stimulating the JAK-STAT signaling pathway. Phosphorylates reticulophagy regulator RETREG1 at 'Ser-151' under endoplasmic reticulum stress conditions which enhances RETREG1 oligomerization and its membrane scission and reticulophagy activity. The sequence is that of Calcium/calmodulin-dependent protein kinase type II subunit beta (CAMK2B) from Homo sapiens (Human).